The sequence spans 112 residues: Protein Churchill (112 aa).

Zn(2+)-binding residues include C2, C5, C30, C33, H59, C61, C64, H66, H71, C88, and C91.

This sequence belongs to the Churchill family.

Functionally, transcriptional activator that mediates FGF signaling during neural development. Plays a role in the regulation of cell movement. Does not bind DNA by itself. This chain is Protein Churchill (churc1), found in Xenopus laevis (African clawed frog).